A 666-amino-acid chain; its full sequence is DNA-directed RNA polymerase subunit beta' (666 aa).

Residues C69, C71, C87, and C90 each coordinate Zn(2+). The Mg(2+) site is built by D489, D491, and D493.

Belongs to the RNA polymerase beta' chain family. RpoC1 subfamily. In plastids the minimal PEP RNA polymerase catalytic core is composed of four subunits: alpha, beta, beta', and beta''. When a (nuclear-encoded) sigma factor is associated with the core the holoenzyme is formed, which can initiate transcription. Requires Mg(2+) as cofactor. The cofactor is Zn(2+).

It localises to the plastid. The protein resides in the chloroplast. It catalyses the reaction RNA(n) + a ribonucleoside 5'-triphosphate = RNA(n+1) + diphosphate. Its function is as follows. DNA-dependent RNA polymerase catalyzes the transcription of DNA into RNA using the four ribonucleoside triphosphates as substrates. The sequence is that of DNA-directed RNA polymerase subunit beta' from Chara vulgaris (Common stonewort).